The sequence spans 290 residues: Eukaryotic translation initiation factor 3 subunit G (290 aa).

Disordered stretches follow at residues 1-35 (MSRL…DGTK) and 157-200 (ESTG…GERM). The RRM domain occupies 210–288 (ATLRVTNVSE…LILRVEFAKR (79 aa)).

This sequence belongs to the eIF-3 subunit G family. In terms of assembly, component of the eukaryotic translation initiation factor 3 (eIF-3) complex.

It localises to the cytoplasm. Functionally, RNA-binding component of the eukaryotic translation initiation factor 3 (eIF-3) complex, which is involved in protein synthesis of a specialized repertoire of mRNAs and, together with other initiation factors, stimulates binding of mRNA and methionyl-tRNAi to the 40S ribosome. The eIF-3 complex specifically targets and initiates translation of a subset of mRNAs involved in cell proliferation. This subunit can bind 18S rRNA. The chain is Eukaryotic translation initiation factor 3 subunit G (tif35) from Aspergillus clavatus (strain ATCC 1007 / CBS 513.65 / DSM 816 / NCTC 3887 / NRRL 1 / QM 1276 / 107).